Here is a 482-residue protein sequence, read N- to C-terminus: Aspartic proteinase 36 (482 aa).

Positions 1–27 (MVTTMDPSRISRIVAVVFVLVIQVVSG) are cleaved as a signal peptide. N-linked (GlcNAc...) asparagine glycosylation occurs at Asn-32. The 352-residue stretch at 78 to 429 (YFTKIKLGSP…DLENEVIGWA (352 aa)) folds into the Peptidase A1 domain. Asp-96 is a catalytic residue. N-linked (GlcNAc...) asparagine glycosylation is found at Asn-178, Asn-204, and Asn-226. The active site involves Asp-310. Residues Cys-347 and Cys-388 are joined by a disulfide bond. An N-linked (GlcNAc...) asparagine glycan is attached at Asn-432. Ser-456 carries the GPI-anchor amidated serine lipid modification. Positions 457 to 482 (AASSVMNGTLVTLLSILIWVFHSFTS) are cleaved as a propeptide — removed in mature form. A glycan (N-linked (GlcNAc...) asparagine) is linked at Asn-463.

It belongs to the peptidase A1 family. In terms of tissue distribution, highly expressed in pollen and pollen tubes. Mostly expressed in roots, flowers and inflorescence, and at lower levels in stems, seedlings and siliques.

The protein resides in the cell membrane. The protein localises to the cytoplasm. It is found in the cytosol. Displays aspartic proteolytic activity. Together with A39, contributes to pollen and ovule development, including the apical cell wall constitution of the growing pollen tubes. This Arabidopsis thaliana (Mouse-ear cress) protein is Aspartic proteinase 36.